A 308-amino-acid chain; its full sequence is tRNA pseudouridine synthase B (308 aa).

Aspartate 47 acts as the Nucleophile in catalysis.

This sequence belongs to the pseudouridine synthase TruB family. Type 1 subfamily.

It carries out the reaction uridine(55) in tRNA = pseudouridine(55) in tRNA. Its function is as follows. Responsible for synthesis of pseudouridine from uracil-55 in the psi GC loop of transfer RNAs. This Xanthomonas euvesicatoria pv. vesicatoria (strain 85-10) (Xanthomonas campestris pv. vesicatoria) protein is tRNA pseudouridine synthase B.